The chain runs to 287 residues: Ribosomal RNA-processing protein 8 (287 aa).

Residues 1 to 62 (MTTEENKTSR…SAPSKRPKPS (62 aa)) form a disordered region. The segment covering 9-21 (SRNRKRKRQRNPK) has biased composition (basic residues). Over residues 35–46 (QNEKKNQRDTKN) the composition is skewed to basic and acidic residues. Positions 107, 142, 160, 172, 173, and 189 each coordinate S-adenosyl-L-methionine.

It belongs to the methyltransferase superfamily. RRP8 family.

It is found in the nucleus. It localises to the nucleolus. Functionally, probable methyltransferase required to silence rDNA. The polypeptide is Ribosomal RNA-processing protein 8 (Arabidopsis thaliana (Mouse-ear cress)).